The sequence spans 329 residues: Malate dehydrogenase (329 aa).

Residue 12–18 (GAAGQIG) coordinates NAD(+). Substrate contacts are provided by R95 and R101. NAD(+)-binding positions include N108, Q115, and 132–134 (VGN). Positions 134 and 165 each coordinate substrate. The active-site Proton acceptor is H190.

It belongs to the LDH/MDH superfamily. MDH type 2 family.

The catalysed reaction is (S)-malate + NAD(+) = oxaloacetate + NADH + H(+). Its function is as follows. Catalyzes the reversible oxidation of malate to oxaloacetate. The chain is Malate dehydrogenase from Herminiimonas arsenicoxydans.